The sequence spans 35 residues: Sperm protamine alpha isoform 1 (35 aa).

The interval 1-35 is disordered; sequence MPRRRRRASRPVRRRRRARRSTAVRRRRRVVRRRR. A phosphoserine mark is found at serine 9 and serine 21.

Post-translationally, phosphorylated in immature sperm. Dephosphorylated in mature sperm allowing a stronger interaction with DNA. As to expression, gonads.

The protein resides in the nucleus. The protein localises to the chromosome. Its function is as follows. Protamines substitute for histones in the chromatin of sperm during the haploid phase of spermatogenesis. They compact sperm DNA into a highly condensed, stable and inactive complex. This is Sperm protamine alpha isoform 1 from Scomber scombrus (Atlantic mackerel).